The chain runs to 159 residues: Ribosomal RNA large subunit methyltransferase H (159 aa).

S-adenosyl-L-methionine is bound by residues leucine 76, glycine 108, and 127 to 132; that span reads FSKMTF.

Belongs to the RNA methyltransferase RlmH family. In terms of assembly, homodimer.

The protein localises to the cytoplasm. It catalyses the reaction pseudouridine(1915) in 23S rRNA + S-adenosyl-L-methionine = N(3)-methylpseudouridine(1915) in 23S rRNA + S-adenosyl-L-homocysteine + H(+). Functionally, specifically methylates the pseudouridine at position 1915 (m3Psi1915) in 23S rRNA. This is Ribosomal RNA large subunit methyltransferase H from Staphylococcus aureus (strain MSSA476).